Consider the following 182-residue polypeptide: Adenine phosphoribosyltransferase (182 aa).

The protein belongs to the purine/pyrimidine phosphoribosyltransferase family. Homodimer.

The protein localises to the cytoplasm. The enzyme catalyses AMP + diphosphate = 5-phospho-alpha-D-ribose 1-diphosphate + adenine. It participates in purine metabolism; AMP biosynthesis via salvage pathway; AMP from adenine: step 1/1. In terms of biological role, catalyzes a salvage reaction resulting in the formation of AMP, that is energically less costly than de novo synthesis. This Pseudomonas entomophila (strain L48) protein is Adenine phosphoribosyltransferase.